Here is a 546-residue protein sequence, read N- to C-terminus: Phosphomethylpyrimidine synthase (546 aa).

Substrate contacts are provided by residues N145, M174, Y203, H239, 259–261 (SRG), 300–303 (DGLR), and E339. A Zn(2+)-binding site is contributed by H343. Y366 contributes to the substrate binding site. H407 lines the Zn(2+) pocket. [4Fe-4S] cluster-binding residues include C487, C490, and C495.

It belongs to the ThiC family. [4Fe-4S] cluster serves as cofactor.

It carries out the reaction 5-amino-1-(5-phospho-beta-D-ribosyl)imidazole + S-adenosyl-L-methionine = 4-amino-2-methyl-5-(phosphooxymethyl)pyrimidine + CO + 5'-deoxyadenosine + formate + L-methionine + 3 H(+). The protein operates within cofactor biosynthesis; thiamine diphosphate biosynthesis. Catalyzes the synthesis of the hydroxymethylpyrimidine phosphate (HMP-P) moiety of thiamine from aminoimidazole ribotide (AIR) in a radical S-adenosyl-L-methionine (SAM)-dependent reaction. The sequence is that of Phosphomethylpyrimidine synthase from Mycobacterium marinum (strain ATCC BAA-535 / M).